We begin with the raw amino-acid sequence, 101 residues long: Chaperone modulatory protein CbpM (101 aa).

It belongs to the CbpM family.

Interacts with CbpA and inhibits both the DnaJ-like co-chaperone activity and the DNA binding activity of CbpA. Together with CbpA, modulates the activity of the DnaK chaperone system. Does not inhibit the co-chaperone activity of DnaJ. The sequence is that of Chaperone modulatory protein CbpM from Pseudomonas putida (strain ATCC 700007 / DSM 6899 / JCM 31910 / BCRC 17059 / LMG 24140 / F1).